We begin with the raw amino-acid sequence, 1193 residues long: Probable DNA-directed RNA polymerase II subunit RPB2 homolog (1193 aa).

Position 808 (Asp808) interacts with Mg(2+). Zn(2+) is bound by residues Cys1137, Cys1140, Cys1155, and Cys1158. The segment at 1137–1158 adopts a C4-type zinc-finger fold; the sequence is CVPCKSYFKVVKTQNGFFCSGC.

It belongs to the RNA polymerase beta chain family.

The catalysed reaction is RNA(n) + a ribonucleoside 5'-triphosphate = RNA(n+1) + diphosphate. Its function is as follows. Component of the DNA-dependent RNA polymerase that catalyzes the transcription of DNA into RNA using the four ribonucleoside triphosphates as substrates. Second largest component of RNA polymerase II which synthesizes mRNA precursors and many functional non-coding RNAs. Proposed to contribute to the polymerase catalytic activity and forms the polymerase active center together with the largest subunit. This is Probable DNA-directed RNA polymerase II subunit RPB2 homolog from Invertebrate iridescent virus 6 (IIV-6).